Consider the following 395-residue polypeptide: Acetate kinase (395 aa).

N8 is a Mg(2+) binding site. K15 provides a ligand contact to ATP. A substrate-binding site is contributed by R90. D147 functions as the Proton donor/acceptor in the catalytic mechanism. Residues 207–211 (HLGNG), 284–286 (DMR), and 330–334 (GIGEN) contribute to the ATP site. E383 contacts Mg(2+).

This sequence belongs to the acetokinase family. As to quaternary structure, homodimer. Requires Mg(2+) as cofactor. It depends on Mn(2+) as a cofactor.

The protein localises to the cytoplasm. The enzyme catalyses acetate + ATP = acetyl phosphate + ADP. Its pathway is metabolic intermediate biosynthesis; acetyl-CoA biosynthesis; acetyl-CoA from acetate: step 1/2. Its function is as follows. Catalyzes the formation of acetyl phosphate from acetate and ATP. Can also catalyze the reverse reaction. The sequence is that of Acetate kinase from Enterococcus faecalis (strain ATCC 700802 / V583).